A 381-amino-acid polypeptide reads, in one-letter code: Phosphatidyl-myo-inositol mannosyltransferase (381 aa).

The GDP-alpha-D-mannose site is built by tyrosine 9 and glycine 16. A 1,2-diacyl-sn-glycero-3-phospho-(1D-myo-inositol)-binding positions include glutamine 18, 69 to 70, and arginine 75; that span reads FN. Residues arginine 204, 209–210, 251–253, arginine 256, 274–278, and glutamate 282 each bind GDP-alpha-D-mannose; these read RK, LDD, and ESFGI.

This sequence belongs to the glycosyltransferase group 1 family. Glycosyltransferase 4 subfamily. Monomer. The cofactor is Mg(2+).

The protein localises to the cell membrane. The catalysed reaction is a 1,2-diacyl-sn-glycero-3-phospho-(1D-myo-inositol) + GDP-alpha-D-mannose = a 1,2-diacyl-sn-glycero-3-phospho-[alpha-D-mannopyranosyl-(1&lt;-&gt;6)-D-myo-inositol] + GDP + H(+). It functions in the pathway phospholipid metabolism; phosphatidylinositol metabolism. In terms of biological role, involved in the biosynthesis of phosphatidyl-myo-inositol mannosides (PIM) which are early precursors in the biosynthesis of lipomannans (LM) and lipoarabinomannans (LAM). Catalyzes the addition of a mannosyl residue from GDP-D-mannose (GDP-Man) to the position 2 of the carrier lipid phosphatidyl-myo-inositol (PI) to generate a phosphatidyl-myo-inositol bearing an alpha-1,2-linked mannose residue (PIM1). The protein is Phosphatidyl-myo-inositol mannosyltransferase of Propionibacterium freudenreichii subsp. shermanii (strain ATCC 9614 / DSM 4902 / CIP 103027 / NCIMB 8099 / CIRM-BIA1).